Here is a 256-residue protein sequence, read N- to C-terminus: MLRIADKTFDSHLFTGTGKFASSQLMVEAIRASGSQLVTLAMKRVDLRQHNDAILEPLIAAGVTLLPNTSGAKTAEEAIFAAHLAREALGTNWLKLEIHPDARWLLPDPIETLKAAETLVQQGFVVLPYCGADPVLCKRLEEVGCAAVMPLGAPIGSNQGLETRAMLEIIIQQATVPVVVDAGIGVPSHAAQALEMGADAVLVNTAIAVADDPVNMAKAFRLAVEAGLLAPQSGPGSRSYFAHATSPLTGFLEASV.

The active-site Schiff-base intermediate with DXP is the lysine 95. Residues glycine 156, 182-183 (AG), and 204-205 (NT) each bind 1-deoxy-D-xylulose 5-phosphate.

It belongs to the ThiG family. Homotetramer. Forms heterodimers with either ThiH or ThiS.

The protein localises to the cytoplasm. It carries out the reaction [ThiS sulfur-carrier protein]-C-terminal-Gly-aminoethanethioate + 2-iminoacetate + 1-deoxy-D-xylulose 5-phosphate = [ThiS sulfur-carrier protein]-C-terminal Gly-Gly + 2-[(2R,5Z)-2-carboxy-4-methylthiazol-5(2H)-ylidene]ethyl phosphate + 2 H2O + H(+). The protein operates within cofactor biosynthesis; thiamine diphosphate biosynthesis. Catalyzes the rearrangement of 1-deoxy-D-xylulose 5-phosphate (DXP) to produce the thiazole phosphate moiety of thiamine. Sulfur is provided by the thiocarboxylate moiety of the carrier protein ThiS. In vitro, sulfur can be provided by H(2)S. The polypeptide is Thiazole synthase (Escherichia coli O157:H7).